The chain runs to 117 residues: Large ribosomal subunit protein bL20c (117 aa).

It belongs to the bacterial ribosomal protein bL20 family.

The protein localises to the plastid. It localises to the chloroplast. Its function is as follows. Binds directly to 23S ribosomal RNA and is necessary for the in vitro assembly process of the 50S ribosomal subunit. It is not involved in the protein synthesizing functions of that subunit. The sequence is that of Large ribosomal subunit protein bL20c from Manihot esculenta (Cassava).